Reading from the N-terminus, the 92-residue chain is MQFHLLVMTTIAASFAATGSALPHTNVLPKIGTLRGAINNDAATFNGRALRNTENRGLIGDDSDSSISDSDSEAKEYRAYKSHKEHFGYQMP.

Residues 1–21 (MQFHLLVMTTIAASFAATGSA) form the signal peptide. The RxLR motif lies at 48–51 (RALR). The disordered stretch occupies residues 54–75 (ENRGLIGDDSDSSISDSDSEAK).

The protein belongs to the RxLR effector family.

Its subcellular location is the secreted. It is found in the host cytoplasm. The protein localises to the host nucleus. Functionally, secreted effector that suppresses pattern-triggered immunity (PTI) in plant host. The chain is Secreted RxLR effector protein RXLR-C02 from Plasmopara halstedii (Downy mildew of sunflower).